A 223-amino-acid chain; its full sequence is Peptidyl-prolyl cis-trans isomerase, mitochondrial (223 aa).

Residues 1-44 (MFGPRHFSVLKTTGSLVSSTFSSSLKPTATFSCARAFSQTSSIM) constitute a mitochondrion transit peptide. The 161-residue stretch at 62–222 (NKPTSEIKAQ…KKPTIVDCGA (161 aa)) folds into the PPIase cyclophilin-type domain.

The protein belongs to the cyclophilin-type PPIase family.

It is found in the mitochondrion. Its subcellular location is the cytoplasm. It carries out the reaction [protein]-peptidylproline (omega=180) = [protein]-peptidylproline (omega=0). Binds cyclosporin A (CsA). CsA mediates some of its effects via an inhibitory action on PPIase. In terms of biological role, PPIases accelerate the folding of proteins. It catalyzes the cis-trans isomerization of proline imidic peptide bonds in oligopeptides. The protein is Peptidyl-prolyl cis-trans isomerase, mitochondrial (csr-1) of Neurospora crassa (strain ATCC 24698 / 74-OR23-1A / CBS 708.71 / DSM 1257 / FGSC 987).